A 94-amino-acid polypeptide reads, in one-letter code: Progonadoliberin-1 (94 aa).

The N-terminal stretch at 1 to 22 is a signal peptide; sequence MAAKILALWLLLAGTVFPQGCC. Glutamine 23 carries the pyrrolidone carboxylic acid modification. The residue at position 32 (glycine 32) is a Glycine amide.

The protein belongs to the GnRH family. Synthesized in preoptic neurons and is transported to the pituitary in the preoptic-hypophyseal axons.

It is found in the secreted. Its function is as follows. Stimulates the secretion of gonadotropins. May be responsible for the regulation of the hypothalamic-pituitary-gonadal axis. This chain is Progonadoliberin-1 (gnrh1), found in Haplochromis burtoni (Burton's mouthbrooder).